We begin with the raw amino-acid sequence, 839 residues long: Flocculation protein FLO11 (839 aa).

Positions Met1–Gly22 are cleaved as a signal peptide. The region spanning Ser24–Val194 is the Flo11 1 domain. 4 disulfides stabilise this stretch: Cys28–Cys188, Cys37–Cys167, Cys129–Cys192, and Cys143–Cys152. Asn79 is a glycosylation site (N-linked (GlcNAc...) asparagine). Residues Lys187 to Ser342 form a disordered region. Acidic residues predominate over residues Thr198–Glu317. Residues Glu332–Val502 enclose the Flo11 2 domain. A glycan (N-linked (GlcNAc...) asparagine) is linked at Asn387. The tract at residues Cys496–Asp606 is disordered. Residues Thr506–Thr592 are compositionally biased toward acidic residues. Over residues Thr593–Asp606 the composition is skewed to low complexity.

This sequence belongs to the flocculin family. Highly divergent.

Homophilic binding protein that enables kin discrimination in heterogeneous yeast populations by mediating homotypic cell-cell interactions during flocculation, a reversible and asexual process in which cells adhere to form aggregates (flocs). The chain is Flocculation protein FLO11 from Komagataella phaffii (strain GS115 / ATCC 20864) (Yeast).